The following is a 469-amino-acid chain: UDP-N-acetylmuramate--L-alanine ligase (469 aa).

An ATP-binding site is contributed by 112–118 (GTHGKTT).

This sequence belongs to the MurCDEF family.

It is found in the cytoplasm. The catalysed reaction is UDP-N-acetyl-alpha-D-muramate + L-alanine + ATP = UDP-N-acetyl-alpha-D-muramoyl-L-alanine + ADP + phosphate + H(+). Its pathway is cell wall biogenesis; peptidoglycan biosynthesis. Functionally, cell wall formation. The protein is UDP-N-acetylmuramate--L-alanine ligase of Laribacter hongkongensis (strain HLHK9).